The sequence spans 269 residues: Protein OPG079 (269 aa).

The protein belongs to the orthopoxvirus OPG079 family. Homoomultimer (Potential). Interacts with the small subunit of ribonucleotide reductase.

Its subcellular location is the host cytoplasm. Plays an essential role in viral DNA replication. Binds to ssDNA with high affinity and localizes to cytoplasmic factories where nascent viral genomes accumulate. May disrupt loops, hairpins and other secondary structures present on ssDNA to reduce and eliminate pausing of viral DNA polymerase at specific sites during elongation. This Cynomys gunnisoni (Gunnison's prairie dog) protein is Protein OPG079 (OPG079).